The following is a 237-amino-acid chain: Phosphoadenosine 5'-phosphosulfate reductase (237 aa).

Cysteine 231 (nucleophile; cysteine thiosulfonate intermediate) is an active-site residue.

The protein belongs to the PAPS reductase family. CysH subfamily.

Its subcellular location is the cytoplasm. The enzyme catalyses [thioredoxin]-disulfide + sulfite + adenosine 3',5'-bisphosphate + 2 H(+) = [thioredoxin]-dithiol + 3'-phosphoadenylyl sulfate. The protein operates within sulfur metabolism; hydrogen sulfide biosynthesis; sulfite from sulfate: step 3/3. Its function is as follows. Catalyzes the formation of sulfite from phosphoadenosine 5'-phosphosulfate (PAPS) using thioredoxin as an electron donor. The sequence is that of Phosphoadenosine 5'-phosphosulfate reductase from Xylella fastidiosa (strain M12).